Here is a 215-residue protein sequence, read N- to C-terminus: MSALPFVRVRQHVNPLAQKYLTPANPLEWEKVYSSPHQPLHLDIGCARGRFVLQMAQVEPRWNFLGLEIREPLVIEANQFRSQLGLSNLHYLYCNANNSLQPLLSSLPTGILQRVTIQFPDPWFKTRHAKRRVVQPELVQDIANYLAVGGVVFLQSDMEFVAVEMCDRFAANPAFKKVGSGEWLSENPLPVATERETTTQNRGEPVYRALFERIS.

The S-adenosyl-L-methionine site is built by aspartate 43, glutamate 68, asparagine 95, and aspartate 121. Aspartate 121 is a catalytic residue. The substrate site is built by lysine 125 and aspartate 157.

The protein belongs to the class I-like SAM-binding methyltransferase superfamily. TrmB family.

The enzyme catalyses guanosine(46) in tRNA + S-adenosyl-L-methionine = N(7)-methylguanosine(46) in tRNA + S-adenosyl-L-homocysteine. It participates in tRNA modification; N(7)-methylguanine-tRNA biosynthesis. In terms of biological role, catalyzes the formation of N(7)-methylguanine at position 46 (m7G46) in tRNA. The polypeptide is tRNA (guanine-N(7)-)-methyltransferase (Trichormus variabilis (strain ATCC 29413 / PCC 7937) (Anabaena variabilis)).